The sequence spans 118 residues: Large ribosomal subunit protein bL20 (118 aa).

Belongs to the bacterial ribosomal protein bL20 family.

In terms of biological role, binds directly to 23S ribosomal RNA and is necessary for the in vitro assembly process of the 50S ribosomal subunit. It is not involved in the protein synthesizing functions of that subunit. The protein is Large ribosomal subunit protein bL20 of Aliarcobacter butzleri (strain RM4018) (Arcobacter butzleri).